A 521-amino-acid polypeptide reads, in one-letter code: Bifunctional purine biosynthesis protein PurH (521 aa).

One can recognise an MGS-like domain in the interval 1–145; sequence MIKQALISVS…KNHRDVTVIV (145 aa).

This sequence belongs to the PurH family.

The catalysed reaction is (6R)-10-formyltetrahydrofolate + 5-amino-1-(5-phospho-beta-D-ribosyl)imidazole-4-carboxamide = 5-formamido-1-(5-phospho-D-ribosyl)imidazole-4-carboxamide + (6S)-5,6,7,8-tetrahydrofolate. It catalyses the reaction IMP + H2O = 5-formamido-1-(5-phospho-D-ribosyl)imidazole-4-carboxamide. It functions in the pathway purine metabolism; IMP biosynthesis via de novo pathway; 5-formamido-1-(5-phospho-D-ribosyl)imidazole-4-carboxamide from 5-amino-1-(5-phospho-D-ribosyl)imidazole-4-carboxamide (10-formyl THF route): step 1/1. Its pathway is purine metabolism; IMP biosynthesis via de novo pathway; IMP from 5-formamido-1-(5-phospho-D-ribosyl)imidazole-4-carboxamide: step 1/1. The protein is Bifunctional purine biosynthesis protein PurH of Burkholderia multivorans (strain ATCC 17616 / 249).